We begin with the raw amino-acid sequence, 283 residues long: 32 kDa beta-galactoside-binding lectin (283 aa).

Galectin domains are found at residues 17 to 148 (YRSL…VHWG) and 156 to 283 (YESG…IQIQ). 217–223 (WGNEERE) is an a beta-D-galactoside binding site.

(Microbial infection) Interacts (via domain galectin 2) with goat TMEM147. Interacts (via domain galectin 1) with goat TMEM63A.

It is found in the membrane. In terms of biological role, binds galactose. Exerts immunomodulatory effects on host peripheral blood mononuclear cells to down-regulate host immune response. Hemagglutinates human, dog, rabbit, chicken and mouse erythrocytes but does not hemagglutinate the erythrocytes of goat, its natural host. The sequence is that of 32 kDa beta-galactoside-binding lectin (GAL-1) from Haemonchus contortus (Barber pole worm).